Consider the following 367-residue polypeptide: Histidinol-phosphate aminotransferase 1 (367 aa).

Position 229 is an N6-(pyridoxal phosphate)lysine (lysine 229).

Belongs to the class-II pyridoxal-phosphate-dependent aminotransferase family. Histidinol-phosphate aminotransferase subfamily. In terms of assembly, homodimer. Pyridoxal 5'-phosphate serves as cofactor.

The enzyme catalyses L-histidinol phosphate + 2-oxoglutarate = 3-(imidazol-4-yl)-2-oxopropyl phosphate + L-glutamate. It participates in amino-acid biosynthesis; L-histidine biosynthesis; L-histidine from 5-phospho-alpha-D-ribose 1-diphosphate: step 7/9. The chain is Histidinol-phosphate aminotransferase 1 (hisC1) from Mesorhizobium japonicum (strain LMG 29417 / CECT 9101 / MAFF 303099) (Mesorhizobium loti (strain MAFF 303099)).